The sequence spans 81 residues: Short neurotoxin 1 (81 aa).

The N-terminal stretch at 1-21 (MKTLLLTLVVVTIVCLDLGYT) is a signal peptide. Cystine bridges form between Cys-24/Cys-43, Cys-38/Cys-60, Cys-62/Cys-73, and Cys-74/Cys-79.

It belongs to the three-finger toxin family. Short-chain subfamily. Type I alpha-neurotoxin sub-subfamily. In terms of tissue distribution, expressed by the venom gland.

It is found in the secreted. Functionally, binds to muscle nicotinic acetylcholine receptor (nAChR) and inhibit acetylcholine from binding to the receptor, thereby impairing neuromuscular transmission. The protein is Short neurotoxin 1 of Tropidechis carinatus (Australian rough-scaled snake).